A 420-amino-acid chain; its full sequence is Gamma-glutamyl phosphate reductase (420 aa).

It belongs to the gamma-glutamyl phosphate reductase family.

The protein localises to the cytoplasm. The catalysed reaction is L-glutamate 5-semialdehyde + phosphate + NADP(+) = L-glutamyl 5-phosphate + NADPH + H(+). Its pathway is amino-acid biosynthesis; L-proline biosynthesis; L-glutamate 5-semialdehyde from L-glutamate: step 2/2. Its function is as follows. Catalyzes the NADPH-dependent reduction of L-glutamate 5-phosphate into L-glutamate 5-semialdehyde and phosphate. The product spontaneously undergoes cyclization to form 1-pyrroline-5-carboxylate. This chain is Gamma-glutamyl phosphate reductase, found in Neisseria meningitidis serogroup C / serotype 2a (strain ATCC 700532 / DSM 15464 / FAM18).